The chain runs to 191 residues: Syndecan-2-A (191 aa).

The N-terminal stretch at 1-22 (MRNVWLIVPFALLAALSGETWA) is a signal peptide. At 23 to 137 (QADRDLYIDS…NLFHRTEVLA (115 aa)) the chain is on the extracellular side. The tract at residues 32–60 (STESSGNYPVDDDDYSSGSGSGIPARGDD) is disordered. O-linked (Xyl...) (glycosaminoglycan) serine glycosylation is found at Ser36, Ser48, Ser50, and Ser52. The chain crosses the membrane as a helical span at residues 138 to 158 (AVIAGGGIGFLFAVFLILLLV). Residues 159–191 (YRMRKKDEGSYDLGERKPSSAVYQKAPTKEFYA) are Cytoplasmic-facing. Residues 168–191 (SYDLGERKPSSAVYQKAPTKEFYA) are disordered.

This sequence belongs to the syndecan proteoglycan family. Post-translationally, O-glycosylated; contains both heparan sulfate and chondroitin sulfate.

The protein localises to the membrane. Functionally, cell surface proteoglycan. The sequence is that of Syndecan-2-A (sdc2-a) from Xenopus laevis (African clawed frog).